A 185-amino-acid chain; its full sequence is Ribosome-recycling factor (185 aa).

The segment at 141–161 (KQEKDKKISEDDLKRAEKEVQ) is disordered.

The protein belongs to the RRF family.

It localises to the cytoplasm. Functionally, responsible for the release of ribosomes from messenger RNA at the termination of protein biosynthesis. May increase the efficiency of translation by recycling ribosomes from one round of translation to another. The sequence is that of Ribosome-recycling factor from Geotalea uraniireducens (strain Rf4) (Geobacter uraniireducens).